A 637-amino-acid polypeptide reads, in one-letter code: Transmembrane 9 superfamily member 10 (637 aa).

The signal sequence occupies residues 1-23 (MAKVRILIFTLVLFFSLNVHIHG). Residues 24–274 (FYLPGVAPQD…YLLMADDQIH (251 aa)) are Lumenal-facing. Residues 275–295 (WFSIVNSMMIVLFLSGMVAMI) form a helical membrane-spanning segment. Over 296 to 344 (MLRTLYRDISNYNQLESHEEALEETGWKLVHGDVFRPPTNPELLCVYAG) the chain is Cytoplasmic. A helical transmembrane segment spans residues 345–365 (TGVQCFGMILVTMIFACLGFL). Residues 366 to 370 (SPSNR) are Lumenal-facing. Residues 371–391 (GGLMTAMLLLWVFMGLLAGYA) form a helical membrane-spanning segment. At 392–411 (SSRLYKTLRGTEWKRNALKT) the chain is on the cytoplasmic side. A helical transmembrane segment spans residues 412–432 (AFMFPATVFVAFFVLNAIIWG). Over 433 to 444 (QKSSGAVPFGTM) the chain is Lumenal. The chain crosses the membrane as a helical span at residues 445 to 465 (FALVVLWFGISVPLVFIGGYI). Over 466–494 (GFRKPAPEDPVKTNKIPRQIPTQAWYMNP) the chain is Cytoplasmic. A helical membrane pass occupies residues 495–515 (IFSILIGGILPFGAVFIELFF). Topologically, residues 516-527 (ILTSIWLHQFYY) are lumenal. A helical membrane pass occupies residues 528–548 (IFGFLFIVFIILIITCAEITV). At 549–566 (VLCYFQLCSEDYQWWWRS) the chain is on the cytoplasmic side. A helical membrane pass occupies residues 567–587 (YLTSGSSAVYLFLYAVFYFYT). The Lumenal portion of the chain corresponds to 588 to 593 (KLEITK). A helical transmembrane segment spans residues 594–614 (LVSAVLYFGYMLIVSYVFFVF). Residues 615–637 (TGAIGFYACFWFTRLIYSSVKID) are Cytoplasmic-facing. The Endoplasmic reticulum export signal motif lies at 626-631 (FTRLIY). The short motif at 635 to 637 (KID) is the Golgi retention signal element.

The protein belongs to the nonaspanin (TM9SF) (TC 9.A.2) family.

The protein resides in the endosome membrane. Its subcellular location is the golgi apparatus membrane. The chain is Transmembrane 9 superfamily member 10 from Arabidopsis thaliana (Mouse-ear cress).